Consider the following 74-residue polypeptide: Protein A30 homolog (74 aa).

It belongs to the chordopoxvirinae A30 family. As to quaternary structure, interacts with protein G7; the interaction stabilizes both proteins. Post-translationally, phosphorylated by viral F10 kinase.

In terms of biological role, required for the association between the dense viroplasm and the viral membranes to form the mature virion (MV). This Fowlpox virus (strain NVSL) (FPV) protein is Protein A30 homolog.